Here is a 355-residue protein sequence, read N- to C-terminus: Histidinol-phosphate aminotransferase (355 aa).

Lysine 222 carries the N6-(pyridoxal phosphate)lysine modification.

The protein belongs to the class-II pyridoxal-phosphate-dependent aminotransferase family. Histidinol-phosphate aminotransferase subfamily. Pyridoxal 5'-phosphate is required as a cofactor.

The enzyme catalyses L-histidinol phosphate + 2-oxoglutarate = 3-(imidazol-4-yl)-2-oxopropyl phosphate + L-glutamate. The protein operates within amino-acid biosynthesis; L-histidine biosynthesis; L-histidine from 5-phospho-alpha-D-ribose 1-diphosphate: step 7/9. The protein is Histidinol-phosphate aminotransferase of Natronomonas pharaonis (strain ATCC 35678 / DSM 2160 / CIP 103997 / JCM 8858 / NBRC 14720 / NCIMB 2260 / Gabara) (Halobacterium pharaonis).